The chain runs to 401 residues: Phosphoglycerate kinase (401 aa).

Residues 26–28 (DFN), R41, 64–67 (HLGK), R125, and R158 contribute to the substrate site. Residues K209, G300, E331, and 357–360 (GGDS) contribute to the ATP site.

It belongs to the phosphoglycerate kinase family. As to quaternary structure, monomer.

The protein resides in the cytoplasm. It catalyses the reaction (2R)-3-phosphoglycerate + ATP = (2R)-3-phospho-glyceroyl phosphate + ADP. The protein operates within carbohydrate degradation; glycolysis; pyruvate from D-glyceraldehyde 3-phosphate: step 2/5. The polypeptide is Phosphoglycerate kinase (Clostridium tetani (strain Massachusetts / E88)).